A 157-amino-acid polypeptide reads, in one-letter code: uncharacterized protein (157 aa).

The signal sequence occupies residues 1–30 (MLPEQGPQPSTMPLWCLLAACTSLPRQAAT).

The protein resides in the secreted. This is an uncharacterized protein from Homo sapiens (Human).